The following is a 371-amino-acid chain: Deoxyhypusine synthase (371 aa).

Residues 107–111 (SNLIS), 133–135 (TTG), E139, and D240 contribute to the NAD(+) site. 138–139 (EE) provides a ligand contact to spermidine. D245 is a binding site for spermidine. G287 is a binding site for NAD(+). Residue H292 coordinates spermidine. 312-313 (TA) contributes to the NAD(+) binding site. Spermidine is bound by residues 318 to 320 (GSD) and 327 to 333 (EAVSWGK). K333 functions as the Nucleophile in the catalytic mechanism. 346–347 (DA) contacts NAD(+).

Belongs to the deoxyhypusine synthase family. NAD(+) is required as a cofactor. Expressed in shoot tips.

The catalysed reaction is [eIF5A protein]-L-lysine + spermidine = [eIF5A protein]-deoxyhypusine + propane-1,3-diamine. Its pathway is protein modification; eIF5A hypusination. Catalyzes the NAD-dependent oxidative cleavage of spermidine and the subsequent transfer of the butylamine moiety of spermidine to the epsilon-amino group of a specific lysine residue of the eIF-5A precursor protein to form the intermediate deoxyhypusine residue. Also able to produce homospermidine from putrescine. This is Deoxyhypusine synthase (DHS1) from Senecio vernalis (Spring groundsel).